We begin with the raw amino-acid sequence, 367 residues long: Glutamate 5-kinase (367 aa).

K9 lines the ATP pocket. Positions 49, 136, and 148 each coordinate substrate. Residues 168 to 169 and 210 to 216 contribute to the ATP site; these read TD and TGGMKSK. A PUA domain is found at 276 to 350; it reads SGQIEIDAGA…GMQSQHIQAR (75 aa).

Belongs to the glutamate 5-kinase family.

The protein localises to the cytoplasm. It catalyses the reaction L-glutamate + ATP = L-glutamyl 5-phosphate + ADP. Its pathway is amino-acid biosynthesis; L-proline biosynthesis; L-glutamate 5-semialdehyde from L-glutamate: step 1/2. Catalyzes the transfer of a phosphate group to glutamate to form L-glutamate 5-phosphate. The protein is Glutamate 5-kinase of Bacillus cereus (strain ATCC 10987 / NRS 248).